Reading from the N-terminus, the 277-residue chain is Phosphoenolpyruvate synthase regulatory protein (277 aa).

An ADP-binding site is contributed by 157–164; the sequence is GVSRCGKT.

It belongs to the pyruvate, phosphate/water dikinase regulatory protein family. PSRP subfamily.

The enzyme catalyses [pyruvate, water dikinase] + ADP = [pyruvate, water dikinase]-phosphate + AMP + H(+). The catalysed reaction is [pyruvate, water dikinase]-phosphate + phosphate + H(+) = [pyruvate, water dikinase] + diphosphate. In terms of biological role, bifunctional serine/threonine kinase and phosphorylase involved in the regulation of the phosphoenolpyruvate synthase (PEPS) by catalyzing its phosphorylation/dephosphorylation. This chain is Phosphoenolpyruvate synthase regulatory protein, found in Salmonella gallinarum (strain 287/91 / NCTC 13346).